A 113-amino-acid polypeptide reads, in one-letter code: Protein PucD (113 aa).

Seems to be required for the LH-II stabilization. The polypeptide is Protein PucD (pucD) (Rhodobacter capsulatus (Rhodopseudomonas capsulata)).